Consider the following 164-residue polypeptide: Low molecular weight phosphotyrosine protein phosphatase 2 (164 aa).

The Nucleophile role is filled by cysteine 14. Arginine 20 is a catalytic residue. The active-site Proton donor is aspartate 130.

It belongs to the low molecular weight phosphotyrosine protein phosphatase family. In terms of tissue distribution, cone cells and primary pigment cells in developing pupal retina.

It localises to the cytoplasm. The enzyme catalyses O-phospho-L-tyrosyl-[protein] + H2O = L-tyrosyl-[protein] + phosphate. It catalyses the reaction a phosphate monoester + H2O = an alcohol + phosphate. In terms of biological role, catalyzes the dephosphorylation of tyrosine phosphorylated proteins and low-MW aryl phosphates. Can contribute to the regulation of a variety of developmental processes. The protein is Low molecular weight phosphotyrosine protein phosphatase 2 (primo-2) of Drosophila melanogaster (Fruit fly).